We begin with the raw amino-acid sequence, 104 residues long: MKIHKGDMVIVISGPDKGAKGKVIEAYPKRDKVLVEGVNRVKKHVANSATERGAESGGIVTQEAPIHVSNVAIVDSEGNPTRVGYRFDENGKKVRIARSNGKDI.

The protein belongs to the universal ribosomal protein uL24 family. As to quaternary structure, part of the 50S ribosomal subunit.

Functionally, one of two assembly initiator proteins, it binds directly to the 5'-end of the 23S rRNA, where it nucleates assembly of the 50S subunit. Its function is as follows. One of the proteins that surrounds the polypeptide exit tunnel on the outside of the subunit. In Corynebacterium aurimucosum (strain ATCC 700975 / DSM 44827 / CIP 107346 / CN-1) (Corynebacterium nigricans), this protein is Large ribosomal subunit protein uL24.